Here is a 121-residue protein sequence, read N- to C-terminus: SITQEQLEKTARTFRQVCQPKHKISDEVADAVNRGVFADTKDFKCYVSCLLDIMQVARKGKVNYEKSLKQIDTMLPDHMKPAFRAGLEACKSAAQGVKDHCEAAAILLQCFYKNNPKFVFP.

2 disulfides stabilise this stretch: C45-C101 and C90-C110.

Belongs to the PBP/GOBP family.

The protein localises to the secreted. Its function is as follows. Present in the aqueous fluid surrounding olfactory sensory dendrites and are thought to aid in the capture and transport of hydrophobic odorants into and through this fluid. In Anopheles gambiae (African malaria mosquito), this protein is General odorant-binding protein 72 (Obp72).